The sequence spans 706 residues: Serotransferrin (706 aa).

An N-terminal signal peptide occupies residues 1–19; sequence MRLAIRALLACAVLGLCLA. Transferrin-like domains are found at residues 23–349 and 363–691; these read VRWC…NLRE and VKWC…NLRQ. 2 disulfides stabilise this stretch: Cys26–Cys64 and Cys36–Cys55. A Dimethylated arginine modification is found at Arg40. Fe(3+)-binding residues include Asp79 and Tyr111. Cystine bridges form between Cys134-Cys215, Cys174-Cys190, Cys177-Cys198, Cys187-Cys200, and Cys248-Cys262. Hydrogencarbonate is bound by residues Thr136, Arg140, Ala142, and Gly143. Residue Tyr209 coordinates Fe(3+). His270 contributes to the Fe(3+) binding site. 11 disulfide bridges follow: Cys360-Cys623, Cys366-Cys398, Cys376-Cys389, Cys423-Cys701, Cys441-Cys664, Cys474-Cys550, Cys498-Cys692, Cys508-Cys522, Cys519-Cys533, Cys590-Cys604, and Cys642-Cys647. Residue Ser391 is modified to Phosphoserine. Positions 413 and 449 each coordinate Fe(3+). Hydrogencarbonate is bound by residues Thr476, Arg480, Ala482, and Gly483. An N-linked (GlcNAc...) asparagine glycan is attached at Asn515. Tyr544 contacts Fe(3+). Position 612 (His612) interacts with Fe(3+). Ser693 is subject to Phosphoserine.

The protein belongs to the transferrin family. As to quaternary structure, monomer. Part of a complex composed of SLC40A1/ferroportin, TF/transferrin and HEPH/hephaestin that transfers iron from cells to transferrin. Expressed by the liver and secreted in plasma.

The protein localises to the secreted. Its function is as follows. Transferrins are iron binding transport proteins which can bind two Fe(3+) ions in association with the binding of an anion, usually bicarbonate. It is responsible for the transport of iron from sites of absorption and heme degradation to those of storage and utilization. Serum transferrin may also have a further role in stimulating cell proliferation. The sequence is that of Serotransferrin (TF) from Equus caballus (Horse).